Consider the following 178-residue polypeptide: Interleukin-10 (178 aa).

Positions 1 to 18 (MHSSALLCCLVLLTGVRA) are cleaved as a signal peptide. 2 disulfide bridges follow: C30/C126 and C80/C132. A glycan (N-linked (GlcNAc...) asparagine) is linked at N134.

Belongs to the IL-10 family. In terms of assembly, homodimer. Interacts with IL10RA and IL10RB.

The protein localises to the secreted. Major immune regulatory cytokine that acts on many cells of the immune system where it has profound anti-inflammatory functions, limiting excessive tissue disruption caused by inflammation. Mechanistically, IL10 binds to its heterotetrameric receptor comprising IL10RA and IL10RB leading to JAK1 and STAT2-mediated phosphorylation of STAT3. In turn, STAT3 translocates to the nucleus where it drives expression of anti-inflammatory mediators. Targets antigen-presenting cells (APCs) such as macrophages and monocytes and inhibits their release of pro-inflammatory cytokines including granulocyte-macrophage colony-stimulating factor /GM-CSF, granulocyte colony-stimulating factor/G-CSF, IL-1 alpha, IL-1 beta, IL-6, IL-8 and TNF-alpha. Also interferes with antigen presentation by reducing the expression of MHC-class II and co-stimulatory molecules, thereby inhibiting their ability to induce T cell activation. In addition, controls the inflammatory response of macrophages by reprogramming essential metabolic pathways including mTOR signaling. This Cercocebus atys (Sooty mangabey) protein is Interleukin-10 (IL10).